A 158-amino-acid chain; its full sequence is 2-C-methyl-D-erythritol 2,4-cyclodiphosphate synthase (158 aa).

Residues Asp9 and His11 each coordinate a divalent metal cation. 4-CDP-2-C-methyl-D-erythritol 2-phosphate-binding positions include 9 to 11 (DVH) and 35 to 36 (HS). His43 provides a ligand contact to a divalent metal cation. 4-CDP-2-C-methyl-D-erythritol 2-phosphate contacts are provided by residues 57 to 59 (DIG), 62 to 66 (FPDTD), 101 to 107 (AQKPKML), 133 to 136 (TTTE), Phe140, and Arg143.

Belongs to the IspF family. In terms of assembly, homotrimer. Requires a divalent metal cation as cofactor.

It catalyses the reaction 4-CDP-2-C-methyl-D-erythritol 2-phosphate = 2-C-methyl-D-erythritol 2,4-cyclic diphosphate + CMP. Its pathway is isoprenoid biosynthesis; isopentenyl diphosphate biosynthesis via DXP pathway; isopentenyl diphosphate from 1-deoxy-D-xylulose 5-phosphate: step 4/6. Involved in the biosynthesis of isopentenyl diphosphate (IPP) and dimethylallyl diphosphate (DMAPP), two major building blocks of isoprenoid compounds. Catalyzes the conversion of 4-diphosphocytidyl-2-C-methyl-D-erythritol 2-phosphate (CDP-ME2P) to 2-C-methyl-D-erythritol 2,4-cyclodiphosphate (ME-CPP) with a corresponding release of cytidine 5-monophosphate (CMP). In Bacillus subtilis (strain 168), this protein is 2-C-methyl-D-erythritol 2,4-cyclodiphosphate synthase.